The chain runs to 100 residues: uncharacterized protein (100 aa).

3 consecutive transmembrane segments (helical) span residues 11-33 (VWSI…SVLM), 45-64 (WMLA…SLVY), and 68-90 (WEGA…GYLI).

The protein localises to the cell membrane. This is an uncharacterized protein from Bacillus subtilis (strain 168).